Reading from the N-terminus, the 515-residue chain is 2-isopropylmalate synthase (515 aa).

The region spanning 5-267 (VIIFDTTLRD…DTRINTQEIH (263 aa)) is the Pyruvate carboxyltransferase domain. Positions 14, 202, 204, and 238 each coordinate Mn(2+). Residues 392 to 515 (VLDKLSAHST…VADIKSHKHH (124 aa)) form a regulatory domain region.

The protein belongs to the alpha-IPM synthase/homocitrate synthase family. LeuA type 1 subfamily. As to quaternary structure, homodimer. It depends on Mn(2+) as a cofactor.

It localises to the cytoplasm. It catalyses the reaction 3-methyl-2-oxobutanoate + acetyl-CoA + H2O = (2S)-2-isopropylmalate + CoA + H(+). It participates in amino-acid biosynthesis; L-leucine biosynthesis; L-leucine from 3-methyl-2-oxobutanoate: step 1/4. In terms of biological role, catalyzes the condensation of the acetyl group of acetyl-CoA with 3-methyl-2-oxobutanoate (2-ketoisovalerate) to form 3-carboxy-3-hydroxy-4-methylpentanoate (2-isopropylmalate). The polypeptide is 2-isopropylmalate synthase (Haemophilus influenzae (strain 86-028NP)).